A 159-amino-acid chain; its full sequence is UPF0303 protein Ping_1243 (159 aa).

This sequence belongs to the UPF0303 family.

In Psychromonas ingrahamii (strain DSM 17664 / CCUG 51855 / 37), this protein is UPF0303 protein Ping_1243.